The primary structure comprises 274 residues: Protein STAY-GREEN, chloroplastic (274 aa).

Residues 1–48 (MAAATSTMSLLPPITQQQRWHAADSLVVLASRCHNSRRRRRCRYVVPR) constitute a chloroplast transit peptide.

The protein belongs to the staygreen family. As to quaternary structure, interacts with LHCII complex. In terms of tissue distribution, expressed in leaves, roots and developing seeds.

The protein resides in the plastid. Its subcellular location is the chloroplast membrane. The protein localises to the chloroplast stroma. Functionally, involved in the disassembling mechanism of the intact light-harvesting complex of photosystem II (LHCII) in the thylakoid membranes. Required to trigger chlorophyll degradation during natural and dark-induced leaf senescence. This Oryza sativa subsp. japonica (Rice) protein is Protein STAY-GREEN, chloroplastic (SGR).